Here is a 216-residue protein sequence, read N- to C-terminus: Small ribosomal subunit protein uS3c (216 aa).

The KH type-2 domain maps to 43 to 115 (FENDWGTLYN…QTRIKVIQVN (73 aa)).

The protein belongs to the universal ribosomal protein uS3 family. In terms of assembly, part of the 30S ribosomal subunit.

Its subcellular location is the plastid. It is found in the chloroplast. This is Small ribosomal subunit protein uS3c (rps3) from Emiliania huxleyi (Coccolithophore).